The following is a 321-amino-acid chain: Ferredoxin--NADP reductase (321 aa).

FAD is bound by residues Glu-33, Gln-41, Tyr-46, Val-86, Leu-119, Asp-277, and Ser-318.

This sequence belongs to the ferredoxin--NADP reductase type 2 family. Homodimer. FAD serves as cofactor.

The catalysed reaction is 2 reduced [2Fe-2S]-[ferredoxin] + NADP(+) + H(+) = 2 oxidized [2Fe-2S]-[ferredoxin] + NADPH. The protein is Ferredoxin--NADP reductase of Lactococcus lactis subsp. cremoris (strain MG1363).